The chain runs to 432 residues: Adenylosuccinate synthetase (432 aa).

GTP is bound by residues 13–19 (GDEGKGK) and 41–43 (GHT). The active-site Proton acceptor is Asp-14. Residues Asp-14 and Gly-41 each coordinate Mg(2+). IMP contacts are provided by residues 14–17 (DEGK), 39–42 (NAGH), Thr-130, Arg-144, Gln-225, Thr-240, and Arg-304. The Proton donor role is filled by His-42. Position 300–306 (300–306 (ATTGRRR)) interacts with substrate. GTP-binding positions include Arg-306, 332-334 (KLD), and 415-417 (STG).

It belongs to the adenylosuccinate synthetase family. Homodimer. Requires Mg(2+) as cofactor.

It is found in the cytoplasm. It catalyses the reaction IMP + L-aspartate + GTP = N(6)-(1,2-dicarboxyethyl)-AMP + GDP + phosphate + 2 H(+). It participates in purine metabolism; AMP biosynthesis via de novo pathway; AMP from IMP: step 1/2. In terms of biological role, plays an important role in the de novo pathway of purine nucleotide biosynthesis. Catalyzes the first committed step in the biosynthesis of AMP from IMP. This chain is Adenylosuccinate synthetase, found in Salmonella paratyphi C (strain RKS4594).